A 185-amino-acid polypeptide reads, in one-letter code: Translocon-associated protein subunit gamma (185 aa).

N-acetylmethionine is present on M1. At 1–27 (MAPKGGPKQQSEEDLLLQDFSRNLSAK) the chain is on the lumenal side. S11 bears the Phosphoserine mark. Residues 28–48 (SSALFFGNAFIVSAIPIWLYW) traverse the membrane as a helical segment. Topologically, residues 49-54 (RIWHMD) are cytoplasmic. Residues 55-76 (LIQSAVLYSVMTLVSTYLVAFA) form a helical membrane-spanning segment. The Lumenal segment spans residues 77–135 (YKNVKFVLKHKVAQKREDAVSKEVTRKLSEADNRKMSRKEKDERILWKKNEVADYEATT). Position 105 is a phosphoserine (S105). The chain crosses the membrane as a helical span at residues 136–157 (FSIFYNNTLFLVLVIVASFFIL). At 158 to 163 (KNFNPT) the chain is on the cytoplasmic side. Residues 164–184 (VNYILSISASSGLIALLSTGS) form a helical membrane-spanning segment.

It belongs to the TRAP-gamma family. As to quaternary structure, heterotetramer of TRAP-alpha, TRAP-beta, TRAP-delta and TRAP-gamma.

It localises to the endoplasmic reticulum membrane. Functionally, TRAP proteins are part of a complex whose function is to bind calcium to the ER membrane and thereby regulate the retention of ER resident proteins. This chain is Translocon-associated protein subunit gamma (SSR3), found in Bos taurus (Bovine).